Consider the following 196-residue polypeptide: Adenylate kinase (196 aa).

Residue 9 to 17 coordinates ATP; sequence GIPGVGKST.

The protein belongs to the archaeal adenylate kinase family.

It is found in the cytoplasm. The enzyme catalyses AMP + ATP = 2 ADP. This is Adenylate kinase from Thermococcus onnurineus (strain NA1).